A 256-amino-acid chain; its full sequence is MSDTESLNDALGLFDEPEDFRPEKPKEHYANYERIDVPDISKSKITNLKLQLVGSSPLWGHLLWNAGIYTARHLDKYPELVSNKNVLELGAASALPSLVAGLIGAKRAVVTDYPDADLMANIQYNVNTIIPDELKENVRVEGYIWGNEYDPLTIHLDGDKKFDLIILSDLVFNHNQHDKLLQTTKDLLATNGKALVVFSPHRPHLLEADLQFFETCKEYGLTPEKIEMVNWKPMFEEDEETAEVRSRVYAYYMTHA.

Positions 1 to 26 (MSDTESLNDALGLFDEPEDFRPEKPK) are disordered. S-adenosyl-L-methionine contacts are provided by residues tryptophan 64, 90 to 92 (GAA), aspartate 112, tryptophan 145, and serine 168.

This sequence belongs to the class I-like SAM-binding methyltransferase superfamily. EFM7 family.

The protein localises to the cytoplasm. Its function is as follows. S-adenosyl-L-methionine-dependent protein methyltransferase that trimethylates the N-terminal glycine 'Gly-2' of elongation factor 1-alpha, before also catalyzing the mono- and dimethylation of 'Lys-3'. The polypeptide is Protein N-terminal and lysine N-methyltransferase EFM7 (Candida glabrata (strain ATCC 2001 / BCRC 20586 / JCM 3761 / NBRC 0622 / NRRL Y-65 / CBS 138) (Yeast)).